Consider the following 371-residue polypeptide: Cyanide hydratase (371 aa).

Residues 6 to 285 (YKAAAVTSEP…DGLLYVDIDL (280 aa)) form the CN hydrolase domain. The active-site Proton acceptor is Glu46. Lys128 is a catalytic residue. Cys163 acts as the Nucleophile in catalysis. The span at 339–353 (GLNRPLDPPKDERHG) shows a compositional bias: basic and acidic residues. The interval 339–371 (GLNRPLDPPKDERHGIVGVAGQKSAEQRKAGDL) is disordered.

Belongs to the carbon-nitrogen hydrolase superfamily. Nitrilase family. In terms of assembly, oligomer of dimers, forming left-handed helical fibers.

The catalysed reaction is formamide = hydrogen cyanide + H2O. Functionally, catalyzes the hydration of cyanide to formamide. Degradation of cyanide may be important for plant pathogenic fungi in infection of cyanogenic plants. Also acts on 2-cyanopyridine, fumaronitrile and benzonitrile, albeit at a lower rate. This is Cyanide hydratase (nit) from Stereum hirsutum (strain FP-91666) (White-rot fungus).